Here is a 183-residue protein sequence, read N- to C-terminus: Inosine/xanthosine triphosphatase (183 aa).

Aspartate 75 serves as a coordination point for Mg(2+). Residue aspartate 75–glycine 76 participates in substrate binding.

The protein belongs to the YjjX NTPase family. In terms of assembly, homodimer. It depends on Mg(2+) as a cofactor. Requires Mn(2+) as cofactor.

It carries out the reaction XTP + H2O = XDP + phosphate + H(+). The catalysed reaction is ITP + H2O = IDP + phosphate + H(+). Its function is as follows. Phosphatase that hydrolyzes non-canonical purine nucleotides such as XTP and ITP to their respective diphosphate derivatives. Probably excludes non-canonical purines from DNA/RNA precursor pool, thus preventing their incorporation into DNA/RNA and avoiding chromosomal lesions. The protein is Inosine/xanthosine triphosphatase of Vibrio vulnificus (strain CMCP6).